Here is a 550-residue protein sequence, read N- to C-terminus: Alkaline phosphatase PhoV (550 aa).

The N-terminal stretch at 1–20 (MKIKLLCISLAVLFCSSANA) is a signal peptide. The Zn(2+) site is built by aspartate 48 and threonine 89. Threonine 89 serves as the catalytic Phosphothreonine intermediate. Substrate is bound by residues asparagine 110 and 171–173 (KDR). Residues aspartate 313, histidine 317, aspartate 360, histidine 361, and histidine 491 each coordinate Zn(2+).

Requires Zn(2+) as cofactor.

Its subcellular location is the cell inner membrane. The enzyme catalyses a phosphate monoester + H2O = an alcohol + phosphate. Subject to competitive inhibition by phosphate. Inhibited by manganese. Magnesium mildly increases enzyme activity when the zinc concentration is suboptimal. Optimal activity is dependent on the presence of 0.01-2% Triton X-100. Triton X-100 at a concentration of 0.05% increases the activity about fivefold relative to that in its absence. The enzyme is even active in Triton X-100 concentrations up to 80%. 50% inhibition by 4 mM EDTA and 50% inhibition by 48 mM sodium citrate. Alkaline phosphatase with broad substrate specificity. In Synechococcus elongatus (strain ATCC 33912 / PCC 7942 / FACHB-805) (Anacystis nidulans R2), this protein is Alkaline phosphatase PhoV.